A 511-amino-acid polypeptide reads, in one-letter code: Vesicular acetylcholine transporter (511 aa).

At 1–36 (MAVGQAKAAMGKISSAIGERSKRISGAMNEPRRKRK) the chain is on the cytoplasmic side. The chain crosses the membrane as a helical span at residues 37-57 (ILLVIVCIAMLLDNMLYMVIV). Residues 58-108 (PIIPNYLETIRTYKLVYITTPSNGTNGSLLNSTQRAVLERNPNANEDIQIG) lie on the Lumenal, vesicle side of the membrane. 3 N-linked (GlcNAc...) asparagine glycosylation sites follow: Asn80, Asn83, and Asn88. Residues 109–129 (VLFASKAILQLLSNPFTGTFI) form a helical membrane-spanning segment. Topologically, residues 130–135 (DRVGYD) are cytoplasmic. Residues 136-156 (IPLLIGLTIMFFSTITFAFGE) form a helical membrane-spanning segment. Residues 157–165 (SYAILFAAR) lie on the Lumenal, vesicle side of the membrane. The chain crosses the membrane as a helical span at residues 166–186 (SLQGLGSAFADTSGIAMIADK). Over 187-197 (YTEESERTQAL) the chain is Cytoplasmic. The chain crosses the membrane as a helical span at residues 198–218 (GIALAFISFGSLVAPPFGGVL). Topologically, residues 219 to 225 (YQFAGKW) are lumenal, vesicle. The chain crosses the membrane as a helical span at residues 226 to 246 (VPFLVLSFVCLLDGILLLMVV). Residues 247–267 (TPFASRTRVNTLQGTPIYKLM) lie on the Cytoplasmic side of the membrane. Residues 268–288 (IDPYIAVVAGALTTCNIPLAF) traverse the membrane as a helical segment. Residues 289–306 (LEPTISNWMKKTMNASEW) are Lumenal, vesicle-facing. Asn302 is a glycosylation site (N-linked (GlcNAc...) asparagine). A helical membrane pass occupies residues 307–327 (QMGITWLPAFFPHILGVYITV). Topologically, residues 328–337 (KLAAKYPNYQ) are cytoplasmic. A helical membrane pass occupies residues 338 to 358 (WLYGAVGLVIIGASSCTIPAC). The Lumenal, vesicle segment spans residues 359 to 363 (RNFEE). The helical transmembrane segment at 364–384 (LIIPLCALCFGIALVDTALLP) threads the bilayer. At 385-400 (TLAFLVDIRYVSVYGS) the chain is on the cytoplasmic side. The helical transmembrane segment at 401–421 (VYAIADISYSVAYALGPIMAG) threads the bilayer. The Lumenal, vesicle segment spans residues 422–428 (QIVHDLG). A helical membrane pass occupies residues 429–449 (FVQLNLGMGLVNILYAPGLLF). Over 450-511 (LRNVCQMKPS…VLSDQEGYSE (62 aa)) the chain is Cytoplasmic. The interval 485 to 511 (EAKEPHGTSSGNHSVHAVLSDQEGYSE) is disordered.

It belongs to the major facilitator superfamily. Vesicular transporter family. In terms of tissue distribution, high expression in the electric lobe of the brain.

It is found in the membrane. Its function is as follows. Involved in acetylcholine transport into synaptic vesicles. In Torpedo marmorata (Marbled electric ray), this protein is Vesicular acetylcholine transporter.